The primary structure comprises 122 residues: Large ribosomal subunit protein uL14 (122 aa).

It belongs to the universal ribosomal protein uL14 family. As to quaternary structure, part of the 50S ribosomal subunit. Forms a cluster with proteins L3 and L19. In the 70S ribosome, L14 and L19 interact and together make contacts with the 16S rRNA in bridges B5 and B8.

Binds to 23S rRNA. Forms part of two intersubunit bridges in the 70S ribosome. In Shewanella amazonensis (strain ATCC BAA-1098 / SB2B), this protein is Large ribosomal subunit protein uL14.